Reading from the N-terminus, the 662-residue chain is MFGKLTFDAIPYHEPIIMITYIAIILIALCIASTITYYKKWKYLWYEWFTTVDHKKISIMYGILAFVMLFRGFVDAILMRTQQVVASAGFKGFLPPHHYDQIFTAHGVIMIFFVAMPLVIGLMNLVIPLQIGARDVAFPFLNNLSFWLNVSSAVLLTLSLGIGEFAQTGWLAYPPLSGIKYSSGVGVDYWIWSLQISGVGTTLTGINFLVTILKMRAPGMSFFKMPVFTWTSLCTNILIVISFPVLTVTLVLLTLDRYFNFHFFTNDLGGNAMMYVNLIWIWGHPEVYILVLPVFGVFSEVVATFSKKRLFGYVSLVWATLSITILSFIVWLHHFFTMGAGADVNTFFGITTMIIAIPTGVKIFNWLFTIYQGRVHMHSSILWTLGFLVTFSIGGMTGVLLSVPPADFVLHNSLFLVAHFHNVIIGGVVFGCFAGINYWFPKLFGFVLNEIWGKRAFWFWIIGFFLAFIPLYFLGLMGMTRRLSQNIDSEFHMLLCIAAIGACFIGIGIICQVIQFFISIKERRHNLDLTGDPWDGRTLEWSTSSPAPLYNFAIIPKVEDRDDFWRNKEGQHYNKLINSINYHDIHMPKNTGLGFMISIFSLFFGFSAVWHITWLCILSFLAIIISLFINSLNEDTEYTISAEEIKKIEHQYWKNIQKAGLK.

At 1-14 (MFGKLTFDAIPYHE) the chain is on the extracellular side. A helical transmembrane segment spans residues 15–35 (PIIMITYIAIILIALCIASTI). At 36-58 (TYYKKWKYLWYEWFTTVDHKKIS) the chain is on the cytoplasmic side. A helical transmembrane segment spans residues 59–79 (IMYGILAFVMLFRGFVDAILM). A ubiquinone is bound by residues R71, D75, and H98. Topologically, residues 80 to 106 (RTQQVVASAGFKGFLPPHHYDQIFTAH) are extracellular. H106 is a heme b binding site. The chain crosses the membrane as a helical span at residues 107–127 (GVIMIFFVAMPLVIGLMNLVI). Residues 128–145 (PLQIGARDVAFPFLNNLS) are Cytoplasmic-facing. A helical transmembrane segment spans residues 146–166 (FWLNVSSAVLLTLSLGIGEFA). Residues 167–189 (QTGWLAYPPLSGIKYSSGVGVDY) lie on the Extracellular side of the membrane. W170 serves as a coordination point for heme b. The helical transmembrane segment at 190-210 (WIWSLQISGVGTTLTGINFLV) threads the bilayer. Residues 211–232 (TILKMRAPGMSFFKMPVFTWTS) lie on the Cytoplasmic side of the membrane. Residues 233–253 (LCTNILIVISFPVLTVTLVLL) traverse the membrane as a helical segment. Residues 254–277 (TLDRYFNFHFFTNDLGGNAMMYVN) lie on the Extracellular side of the membrane. The helical transmembrane segment at 278–298 (LIWIWGHPEVYILVLPVFGVF) threads the bilayer. Residue H284 coordinates Cu(2+). The 1'-histidyl-3'-tyrosine (His-Tyr) cross-link spans 284 to 288 (HPEVY). Residue Y288 coordinates Fe(II)-heme o. The Cytoplasmic portion of the chain corresponds to 299-309 (SEVVATFSKKR). The chain crosses the membrane as a helical span at residues 310 to 330 (LFGYVSLVWATLSITILSFIV). Residues 331–346 (WLHHFFTMGAGADVNT) are Extracellular-facing. H333 and H334 together coordinate Cu(2+). The helical transmembrane segment at 347 to 367 (FFGITTMIIAIPTGVKIFNWL) threads the bilayer. Topologically, residues 368–380 (FTIYQGRVHMHSS) are cytoplasmic. Residues 381–401 (ILWTLGFLVTFSIGGMTGVLL) form a helical membrane-spanning segment. Topologically, residues 402-413 (SVPPADFVLHNS) are extracellular. H411 and H419 together coordinate Fe(II)-heme o. A helical membrane pass occupies residues 414–434 (LFLVAHFHNVIIGGVVFGCFA). Residue H421 participates in heme b binding. Over 435–456 (GINYWFPKLFGFVLNEIWGKRA) the chain is Cytoplasmic. A helical transmembrane segment spans residues 457-477 (FWFWIIGFFLAFIPLYFLGLM). Over 478-493 (GMTRRLSQNIDSEFHM) the chain is Extracellular. 2 residues coordinate heme b: R481 and R482. Residues 494 to 514 (LLCIAAIGACFIGIGIICQVI) traverse the membrane as a helical segment. Residues 515–586 (QFFISIKERR…INSINYHDIH (72 aa)) are Cytoplasmic-facing. A helical transmembrane segment spans residues 587-607 (MPKNTGLGFMISIFSLFFGFS). Residue A608 is a topological domain, extracellular. A helical membrane pass occupies residues 609-629 (VWHITWLCILSFLAIIISLFI). Residues 630 to 662 (NSLNEDTEYTISAEEIKKIEHQYWKNIQKAGLK) lie on the Cytoplasmic side of the membrane.

This sequence belongs to the heme-copper respiratory oxidase family. In terms of assembly, the cytochrome bo(3) ubiquinol oxidase complex is a heterooctamer of two A chains, two B chains, two C chains and two D chains. Cu(2+) is required as a cofactor. Heme b serves as cofactor. It depends on Fe(II)-heme o as a cofactor.

It localises to the cell membrane. The catalysed reaction is 2 a ubiquinol + O2 + n H(+)(in) = 2 a ubiquinone + 2 H2O + n H(+)(out). Its function is as follows. Cytochrome bo(3) ubiquinol oxidase is the terminal enzyme in the aerobic respiratory chain. Catalyzes the four-electron reduction of O2 to water, using a ubiquinol as a membrane soluble electron donor for molecular oxygen reduction. Has proton pump activity across the membrane in addition to electron transfer, pumping 2 protons/electron and generating a proton motive force. All the redox centers of this enzyme complex are located within the largest subunit, subunit I. Protons are probably pumped via D- and K- channels found in this subunit. The chain is Cytochrome bo(3) ubiquinol oxidase subunit 1 (cyoB) from Buchnera aphidicola subsp. Acyrthosiphon pisum (strain APS) (Acyrthosiphon pisum symbiotic bacterium).